We begin with the raw amino-acid sequence, 221 residues long: FMN-dependent NADH:quinone oxidoreductase 1 (221 aa).

FMN is bound by residues 17-19 (SAS) and 148-151 (SSGG).

Belongs to the azoreductase type 1 family. Homodimer. It depends on FMN as a cofactor.

It catalyses the reaction 2 a quinone + NADH + H(+) = 2 a 1,4-benzosemiquinone + NAD(+). It carries out the reaction N,N-dimethyl-1,4-phenylenediamine + anthranilate + 2 NAD(+) = 2-(4-dimethylaminophenyl)diazenylbenzoate + 2 NADH + 2 H(+). Quinone reductase that provides resistance to thiol-specific stress caused by electrophilic quinones. Its function is as follows. Also exhibits azoreductase activity. Catalyzes the reductive cleavage of the azo bond in aromatic azo compounds to the corresponding amines. This Clostridium acetobutylicum (strain ATCC 824 / DSM 792 / JCM 1419 / IAM 19013 / LMG 5710 / NBRC 13948 / NRRL B-527 / VKM B-1787 / 2291 / W) protein is FMN-dependent NADH:quinone oxidoreductase 1.